Here is a 359-residue protein sequence, read N- to C-terminus: 4-galactosyl-N-acetylglucosaminide 3-alpha-L-fucosyltransferase FUT6 (359 aa).

Residues M1–R14 lie on the Cytoplasmic side of the membrane. Residues C15–L34 form a helical; Signal-anchor for type II membrane protein membrane-spanning segment. Over R35–T359 the chain is Lumenal. N-linked (GlcNAc...) asparagine glycosylation is found at N46, N91, N153, and N184. Residues K73 to V112 are determines site-specific fucosylation.

Belongs to the glycosyltransferase 10 family. As to quaternary structure, homodimer and monomer. Monomer (secreted form). In terms of processing, N-glycosylated. Post-translationally, proteolytic cleavage releases a secreted glycoform of 43 kDa.

Its subcellular location is the golgi apparatus. It is found in the golgi stack membrane. It localises to the secreted. The catalysed reaction is a beta-D-galactosyl-(1-&gt;4)-N-acetyl-beta-D-glucosaminyl derivative + GDP-beta-L-fucose = a beta-D-galactosyl-(1-&gt;4)-[alpha-L-fucosyl-(1-&gt;3)]-N-acetyl-beta-D-glucosaminyl derivative + GDP + H(+). It catalyses the reaction an N-acetyl-alpha-neuraminyl-(2-&gt;3)-beta-D-galactosyl-(1-&gt;4)-N-acetyl-beta-D-glucosaminyl derivative + GDP-beta-L-fucose = an alpha-Neu5Ac-(2-&gt;3)-beta-D-Gal-(1-&gt;4)-[alpha-L-Fuc-(1-&gt;3)]-beta-D-GlcNAc derivative + GDP + H(+). The enzyme catalyses an alpha-Neu5Ac-(2-&gt;3)-beta-D-Gal-(1-&gt;4)-beta-D-GlcNAc-(1-&gt;3)-beta-D-Gal-(1-&gt;4)-[alpha-L-Fuc-(1-&gt;3)]-beta-D-GlcNAc derivative + GDP-beta-L-fucose = an alpha-Neu5Ac-(2-&gt;3)-beta-D-Gal-(1-&gt;4)-[alpha-L-Fuc-(1-&gt;3)]-beta-D-GlcNAc-(1-&gt;3)-beta-D-Gal-(1-&gt;4)-[alpha-L-Fuc-(1-&gt;3)]-beta-D-GlcNAc derivative + GDP + H(+). It carries out the reaction a neolactoside nLc6Cer + GDP-beta-L-fucose = beta-D-Gal-(1-&gt;4)-[alpha-L-Fuc-(1-&gt;3)]-beta-D-GlcNAc-(1-&gt;3)-beta-D-Gal-(1-&gt;4)-beta-D-GlcNAc-(1-&gt;3)-beta-D-Gal-(1-&gt;4)-beta-D-Glc-(1&lt;-&gt;1')-Cer + GDP + H(+). The catalysed reaction is a neolactoside nLc6Cer + GDP-beta-L-fucose = beta-D-galactosyl-(1-&gt;4)-N-acetyl-beta-D-glucosaminyl-(1-&gt;3)-beta-D-galactosyl-(1-&gt;4)-[alpha-L-fucosyl-(1-&gt;3)]-N-acetyl-beta-D-glucosaminyl-(1-&gt;3)-beta-D-galactosyl-(1-&gt;4)-beta-D-glucosyl-(1&lt;-&gt;1')-ceramide + GDP + H(+). It catalyses the reaction a neolactoside VI(3)-alpha-NeuNAc-nLc6Cer + GDP-beta-L-fucose = a neolactoside VI(3)-alpha-NeuAc,V(3)-alphaFuc-nLc6Cer + GDP + H(+). The enzyme catalyses beta-D-galactosyl-(1-&gt;4)-N-acetyl-D-glucosamine + GDP-beta-L-fucose = beta-D-galactosyl-(1-&gt;4)-[alpha-L-fucosyl-(1-&gt;3)]-N-acetyl-D-glucosamine + GDP + H(+). It carries out the reaction N-acetyl-alpha-neuraminosyl-(2-&gt;3)-beta-D-galactosyl-(1-&gt;4)-N-acetyl-beta-D-glucosamine + GDP-beta-L-fucose = N-acetyl-alpha-neuraminosyl-(2-&gt;3)-beta-D-galactosyl-(1-&gt;4)-[alpha-L-fucosyl-(1-&gt;3)]-N-acetyl-beta-D-glucosamine + GDP + H(+). The catalysed reaction is lactose + GDP-beta-L-fucose = beta-D-galactosyl-(1-&gt;4)-[alpha-L-fucosyl-(1-&gt;3)]-D-glucose + GDP + H(+). It catalyses the reaction alpha-L-Fuc-(1-&gt;2)-beta-D-Gal-(1-&gt;4)-D-Glc + GDP-beta-L-fucose = alpha-L-Fuc-(1-&gt;2)-beta-D-Gal-(1-&gt;4)-[alpha-L-Fuc-(1-&gt;3)]-D-Glc + GDP + H(+). The enzyme catalyses a beta-D-galactosyl-(1-&gt;4)-N-acetyl-beta-D-6-sulfooxy-glucosaminyl derivative + GDP-beta-L-fucose = a beta-D-galactosyl-(1-&gt;4)-[alpha-L-fucosyl-(1-&gt;3)]-N-acetyl-beta-D-6-sulfooxy-glucosaminyl derivative + GDP + H(+). Its pathway is protein modification; protein glycosylation. Functionally, catalyzes the transfer of L-fucose, from a guanosine diphosphate-beta-L-fucose, to the N-acetyl glucosamine (GlcNAc) of a distal alpha2,3 sialylated lactosamine unit of a glycoprotein- or glycolipid-linked sialopolylactosamines chain or of a distal or internal lactosamine unit of a neutral glycoprotein- or glycolipid-linked polylactosamines chain through an alpha-1,3 glycosidic linkage and participates in surface expression of the sialyl Lewis X (sLe(x)), Lewis X (Le(x)) and non sialylated VIM2 determinants. Moreover transfers fucose to H-type 2 (Fucalpha1-2Galbeta1-4GlcNAc) chain acceptor substrates and participates in difucosylated sialyl Lewis x determinants. Also fucosylates a polylactosamine substrate having a 6 sulfate modification at the GlcNAc moiety and gives rise to sialyl and non-sialyl 6-sulfo lewis X. Does not have activity towards type 1 ((Galbeta1-3GlcNAc)) and H-type 1 chain (Fucalpha1-2Galbeta1-3GlcNAc) acceptors substrates. This chain is 4-galactosyl-N-acetylglucosaminide 3-alpha-L-fucosyltransferase FUT6, found in Pan troglodytes (Chimpanzee).